Consider the following 86-residue polypeptide: U15-lycotoxin-Ls1g (86 aa).

Residues 1 to 20 form the signal peptide; it reads MNSKIFAVLLLLGLLSCVLS. Residues 21 to 66 enclose the WAP domain; sequence DQYCPKSSITACKKMNIRNDCCKDDDCTGGSWCCATPCGNFCKYPA. Intrachain disulfides connect Cys24-Cys54, Cys32-Cys58, Cys41-Cys53, Cys42-Cys80, and Cys47-Cys62.

The protein belongs to the venom protein 11 family. 01 (wap-1) subfamily. In terms of processing, contains 5 disulfide bonds. Expressed by the venom gland.

The protein localises to the secreted. In terms of biological role, has antibacterial activity. This is U15-lycotoxin-Ls1g from Lycosa singoriensis (Wolf spider).